Here is a 173-residue protein sequence, read N- to C-terminus: Photosystem I assembly protein Ycf3 (173 aa).

3 TPR repeats span residues 35-68, 72-105, and 120-153; these read AFAYYRDGMSAQADGEYAEALENYYEALNLEDDP, SYILYNIGLIHASNGEHDQALEYYHQALENNPRM, and GEKAKETGNSRDANSYFDQAAEYWKQAISLAPNN.

It belongs to the Ycf3 family.

It is found in the cellular thylakoid membrane. Functionally, essential for the assembly of the photosystem I (PSI) complex. May act as a chaperone-like factor to guide the assembly of the PSI subunits. The sequence is that of Photosystem I assembly protein Ycf3 from Trichodesmium erythraeum (strain IMS101).